Here is a 2037-residue protein sequence, read N- to C-terminus: Protein SWOLLEN 1 (2037 aa).

Disordered regions lie at residues 141 to 179, 454 to 487, 504 to 531, 567 to 637, 686 to 705, 837 to 893, 1011 to 1045, 1148 to 1197, 1729 to 1748, 1793 to 1812, and 1841 to 2037; these read VEPGQTSHERSLSKEETVNLQPNPSVDDTPGESSVVKTD, REGGVSKKSDNEGSARTSNLEQSMELPVNANDRD, SVGYVSGGSTSELAESESQSDSIPTDKS, KTSS…KDAV, SLPILGSEAGKDGQEEDNTA, VGSP…SGGK, ATPETPLQSRPGKTETPSAGHTNSKESSGTNPMIP, KHVQ…ESGP, SGETISSSHEGDTPKEKRPR, KSTREENKPDPLRMKRTGLQ, and EAST…QSKK. The span at 147–157 shows a compositional bias: basic and acidic residues; the sequence is SHERSLSKEET. Over residues 158 to 176 the composition is skewed to polar residues; the sequence is VNLQPNPSVDDTPGESSVV. The span at 454 to 466 shows a compositional bias: basic and acidic residues; the sequence is REGGVSKKSDNEG. Residues 504–514 show a composition bias toward low complexity; that stretch reads SVGYVSGGSTS. The segment covering 515 to 526 has biased composition (polar residues); that stretch reads ELAESESQSDSI. Positions 841-852 are enriched in low complexity; the sequence is STSSLDKTAAKS. Residues 853–865 are compositionally biased toward basic residues; the sequence is SKAKSERKPRRTS. Composition is skewed to polar residues over residues 1025 to 1041 and 1151 to 1171; these read ETPSAGHTNSKESSGTN and QSGTSSNVSKVTPTLEPTSTV. The span at 1179 to 1189 shows a compositional bias: basic residues; sequence TRVKSRKRKKM. Basic and acidic residues predominate over residues 1794–1805; the sequence is STREENKPDPLR. 3 stretches are compositionally biased toward polar residues: residues 1874–1886, 1942–1964, and 2013–2023; these read KTISIEKQTTISR, EEQTTSSSHDTGSKNSSSLSTNK, and LQTSMMTSKIP. Basic residues predominate over residues 2028–2037; the sequence is SKSHLSQSKK.

In terms of assembly, interacts with importin alpha IMPA1 and IMPA2, required for nuclear-localized proteins import. In terms of tissue distribution, mainly expressed in seedlings, flower buds and stems, and, to a lower extent, in leaves and siliques.

The protein resides in the nucleus. In terms of biological role, under salt stress, appears to prevent the accumulation of reactive oxygen species (ROS) in roots and required for the maintenance of cell wall integrity (cellulose, pectin and lignin composition) by interacting with importin alpha (e.g. IMPA1 and IMPA2) and binding to the promoter of several ROS- and cell wall-related genes to regulate their expression. Necessary for cells organization in meristems and root elongation zones as well as for root elongation in high salinity, but not upon osmotic stress. The polypeptide is Protein SWOLLEN 1 (Arabidopsis thaliana (Mouse-ear cress)).